The following is a 51-amino-acid chain: Large ribosomal subunit protein eL39 (51 aa).

Positions 32 to 51 are disordered; the sequence is KRRVTRSPTRRHWRRVKLKA.

It belongs to the eukaryotic ribosomal protein eL39 family.

This chain is Large ribosomal subunit protein eL39, found in Pyrobaculum arsenaticum (strain DSM 13514 / JCM 11321 / PZ6).